The chain runs to 233 residues: Leucyl/phenylalanyl-tRNA--protein transferase (233 aa).

The protein belongs to the L/F-transferase family.

The protein resides in the cytoplasm. The enzyme catalyses N-terminal L-lysyl-[protein] + L-leucyl-tRNA(Leu) = N-terminal L-leucyl-L-lysyl-[protein] + tRNA(Leu) + H(+). The catalysed reaction is N-terminal L-arginyl-[protein] + L-leucyl-tRNA(Leu) = N-terminal L-leucyl-L-arginyl-[protein] + tRNA(Leu) + H(+). It catalyses the reaction L-phenylalanyl-tRNA(Phe) + an N-terminal L-alpha-aminoacyl-[protein] = an N-terminal L-phenylalanyl-L-alpha-aminoacyl-[protein] + tRNA(Phe). Functionally, functions in the N-end rule pathway of protein degradation where it conjugates Leu, Phe and, less efficiently, Met from aminoacyl-tRNAs to the N-termini of proteins containing an N-terminal arginine or lysine. The polypeptide is Leucyl/phenylalanyl-tRNA--protein transferase (Desulfatibacillum aliphaticivorans).